A 502-amino-acid chain; its full sequence is Exodeoxyribonuclease 7 large subunit (502 aa).

Positions 474–495 (SAPSTTKKSAPKPAAPKAPKTP) are enriched in low complexity. Residues 474-502 (SAPSTTKKSAPKPAAPKAPKTPGEQGSLF) form a disordered region.

The protein belongs to the XseA family. Heterooligomer composed of large and small subunits.

The protein resides in the cytoplasm. It carries out the reaction Exonucleolytic cleavage in either 5'- to 3'- or 3'- to 5'-direction to yield nucleoside 5'-phosphates.. In terms of biological role, bidirectionally degrades single-stranded DNA into large acid-insoluble oligonucleotides, which are then degraded further into small acid-soluble oligonucleotides. The sequence is that of Exodeoxyribonuclease 7 large subunit from Ruegeria sp. (strain TM1040) (Silicibacter sp.).